The primary structure comprises 315 residues: Tyrosine recombinase XerC (315 aa).

A Core-binding (CB) domain is found at 13–104 (ADLAAAREEW…GVRSLLRHLE (92 aa)). A Tyr recombinase domain is found at 125-309 (SLPKPLTADD…DTQRLLEVYD (185 aa)). Active-site residues include Arg168, Lys193, His261, Arg264, and His287. Residue Tyr296 is the O-(3'-phospho-DNA)-tyrosine intermediate of the active site.

It belongs to the 'phage' integrase family. XerC subfamily. In terms of assembly, forms a cyclic heterotetrameric complex composed of two molecules of XerC and two molecules of XerD.

The protein resides in the cytoplasm. In terms of biological role, site-specific tyrosine recombinase, which acts by catalyzing the cutting and rejoining of the recombining DNA molecules. The XerC-XerD complex is essential to convert dimers of the bacterial chromosome into monomers to permit their segregation at cell division. It also contributes to the segregational stability of plasmids. This chain is Tyrosine recombinase XerC, found in Brucella suis biovar 1 (strain 1330).